We begin with the raw amino-acid sequence, 274 residues long: Undecaprenyl-diphosphatase 1 (274 aa).

7 helical membrane passes run 47 to 67 (QVFL…LYFN), 85 to 105 (VSMW…GIPF), 113 to 133 (FYNY…FIMI), 150 to 170 (ITYT…VFPG), 196 to 216 (FFLA…KFGL), 225 to 245 (ILFI…KFLM), and 253 to 273 (FKAF…YFLI).

This sequence belongs to the UppP family.

The protein localises to the cell membrane. It carries out the reaction di-trans,octa-cis-undecaprenyl diphosphate + H2O = di-trans,octa-cis-undecaprenyl phosphate + phosphate + H(+). Catalyzes the dephosphorylation of undecaprenyl diphosphate (UPP). Confers resistance to bacitracin. The chain is Undecaprenyl-diphosphatase 1 from Clostridium acetobutylicum (strain ATCC 824 / DSM 792 / JCM 1419 / IAM 19013 / LMG 5710 / NBRC 13948 / NRRL B-527 / VKM B-1787 / 2291 / W).